A 621-amino-acid chain; its full sequence is Methionine--tRNA ligase (621 aa).

The short motif at 11 to 21 (PYANGPRHIGH) is the 'HIGH' region element. Zn(2+)-binding residues include Cys143, Cys146, Cys156, and Cys159. Residues 347 to 351 (KFSSS) carry the 'KMSKS' region motif. Ser350 provides a ligand contact to ATP.

This sequence belongs to the class-I aminoacyl-tRNA synthetase family. MetG type 1 subfamily. As to quaternary structure, monomer. Requires Zn(2+) as cofactor.

The protein resides in the cytoplasm. The enzyme catalyses tRNA(Met) + L-methionine + ATP = L-methionyl-tRNA(Met) + AMP + diphosphate. Is required not only for elongation of protein synthesis but also for the initiation of all mRNA translation through initiator tRNA(fMet) aminoacylation. This is Methionine--tRNA ligase from Bifidobacterium longum (strain NCC 2705).